The following is a 260-amino-acid chain: tRNA pseudouridine synthase C (260 aa).

Aspartate 54 is a catalytic residue.

The protein belongs to the pseudouridine synthase RluA family.

The enzyme catalyses uridine(65) in tRNA = pseudouridine(65) in tRNA. Its function is as follows. Responsible for synthesis of pseudouridine from uracil-65 in transfer RNAs. The sequence is that of tRNA pseudouridine synthase C (truC) from Escherichia coli O6:H1 (strain CFT073 / ATCC 700928 / UPEC).